Reading from the N-terminus, the 451-residue chain is Phosphoglucosamine mutase (451 aa).

S104 acts as the Phosphoserine intermediate in catalysis. Residues S104, D242, D244, and D246 each coordinate Mg(2+). S104 is modified (phosphoserine).

This sequence belongs to the phosphohexose mutase family. Requires Mg(2+) as cofactor. Activated by phosphorylation.

It catalyses the reaction alpha-D-glucosamine 1-phosphate = D-glucosamine 6-phosphate. Functionally, catalyzes the conversion of glucosamine-6-phosphate to glucosamine-1-phosphate. The chain is Phosphoglucosamine mutase from Kocuria rhizophila (strain ATCC 9341 / DSM 348 / NBRC 103217 / DC2201).